Consider the following 297-residue polypeptide: Diaminopimelate epimerase (297 aa).

Substrate contacts are provided by asparagine 13, glutamine 46, and asparagine 66. Catalysis depends on cysteine 76, which acts as the Proton donor. Residues 77 to 78 (GN), asparagine 174, asparagine 207, and 225 to 226 (ER) each bind substrate. Catalysis depends on cysteine 234, which acts as the Proton acceptor. Position 235–236 (235–236 (GT)) interacts with substrate.

It belongs to the diaminopimelate epimerase family. In terms of assembly, homodimer.

The protein localises to the cytoplasm. The enzyme catalyses (2S,6S)-2,6-diaminopimelate = meso-2,6-diaminopimelate. It functions in the pathway amino-acid biosynthesis; L-lysine biosynthesis via DAP pathway; DL-2,6-diaminopimelate from LL-2,6-diaminopimelate: step 1/1. Its function is as follows. Catalyzes the stereoinversion of LL-2,6-diaminopimelate (L,L-DAP) to meso-diaminopimelate (meso-DAP), a precursor of L-lysine and an essential component of the bacterial peptidoglycan. The sequence is that of Diaminopimelate epimerase from Leptothrix cholodnii (strain ATCC 51168 / LMG 8142 / SP-6) (Leptothrix discophora (strain SP-6)).